The sequence spans 100 residues: Urease subunit gamma (100 aa).

This sequence belongs to the urease gamma subunit family. As to quaternary structure, heterotrimer of UreA (gamma), UreB (beta) and UreC (alpha) subunits. Three heterotrimers associate to form the active enzyme. In terms of processing, although not discussed in the published references, Met-1 is represented in the submitted PDB entries as being modified by either a formyl, a carboxyl, or an acetyl group. The N-terminal is probably N-(dihydroxymethyl)methionine, the hydrated form of N-formylmethionine.

The protein localises to the cytoplasm. The enzyme catalyses urea + 2 H2O + H(+) = hydrogencarbonate + 2 NH4(+). It participates in nitrogen metabolism; urea degradation; CO(2) and NH(3) from urea (urease route): step 1/1. The sequence is that of Urease subunit gamma from Sporosarcina pasteurii (Bacillus pasteurii).